Reading from the N-terminus, the 352-residue chain is Protein YpbB (352 aa).

In terms of assembly, interacts with RecS and SSB (ssbA); the 6 C-terminal residues of SSB are required for interaction with YpbB.

The protein resides in the cytoplasm. It is found in the nucleoid. In Bacillus subtilis (strain 168), this protein is Protein YpbB (ypbB).